We begin with the raw amino-acid sequence, 669 residues long: Probable potassium transport system protein Kup (669 aa).

The next 12 membrane-spanning stretches (helical) occupy residues 47-67 (VLML…TSPL), 86-106 (VIGI…IKYM), 144-164 (TIIG…TPAI), 172-192 (GLTL…IFVM), 206-226 (IGVI…LLGI), 252-272 (GMAG…GEAL), 288-308 (WFFV…ALLL), 326-346 (ALLP…QALI), 378-398 (IYIP…VLTF), 404-424 (LAAA…ILAF), 435-455 (LLKS…FFGA), and 460-480 (IPHG…LMTT).

Belongs to the HAK/KUP transporter (TC 2.A.72) family.

It is found in the cell inner membrane. It carries out the reaction K(+)(in) + H(+)(in) = K(+)(out) + H(+)(out). In terms of biological role, transport of potassium into the cell. Likely operates as a K(+):H(+) symporter. This chain is Probable potassium transport system protein Kup, found in Bdellovibrio bacteriovorus (strain ATCC 15356 / DSM 50701 / NCIMB 9529 / HD100).